A 204-amino-acid chain; its full sequence is Altered inheritance of mitochondria protein 20 (204 aa).

Residues 6–26 (VAVGTAVGIPIAVGVIIALIF) form a helical membrane-spanning segment.

Belongs to the SKG1 family.

It is found in the vacuole membrane. Involved in cell cycle progression and surviving DNA damage. In Saccharomyces cerevisiae (strain RM11-1a) (Baker's yeast), this protein is Altered inheritance of mitochondria protein 20 (AIM20).